We begin with the raw amino-acid sequence, 451 residues long: Medium-chain fatty acid ethyl ester synthase/esterase 2 (451 aa).

Lysine 114 is covalently cross-linked (Glycyl lysine isopeptide (Lys-Gly) (interchain with G-Cter in ubiquitin)). An AB hydrolase-1 domain is found at 166–430 (PLVVILHGLA…GGHLAYLDKD (265 aa)). Active-site charge relay system residues include serine 247, aspartate 395, and histidine 423.

This sequence belongs to the AB hydrolase superfamily. AB hydrolase 4 family.

The catalysed reaction is an aliphatic alcohol + acetyl-CoA = an acetyl ester + CoA. In terms of biological role, displays enzymatic activity both for medium-chain fatty acid (MCFA) ethyl ester synthesis and hydrolysis (esterase activity). MCFA are toxic for yeast and this enzyme could thus be involved in their detoxification by esterification. The sequence is that of Medium-chain fatty acid ethyl ester synthase/esterase 2 (EHT1) from Saccharomyces cerevisiae (strain ATCC 204508 / S288c) (Baker's yeast).